A 372-amino-acid polypeptide reads, in one-letter code: PqqA peptide cyclase (372 aa).

In terms of domain architecture, Radical SAM core spans 4–220 (APPPLSVLLE…ETARRQLGDR (217 aa)). [4Fe-4S] cluster is bound by residues C18, C22, and C25.

This sequence belongs to the radical SAM superfamily. PqqE family. As to quaternary structure, interacts with PqqD. The interaction is necessary for activity of PqqE. Requires [4Fe-4S] cluster as cofactor.

The enzyme catalyses [PQQ precursor protein] + S-adenosyl-L-methionine = E-Y cross-linked-[PQQ precursor protein] + 5'-deoxyadenosine + L-methionine + H(+). It functions in the pathway cofactor biosynthesis; pyrroloquinoline quinone biosynthesis. Its function is as follows. Catalyzes the cross-linking of a glutamate residue and a tyrosine residue in the PqqA protein as part of the biosynthesis of pyrroloquinoline quinone (PQQ). The chain is PqqA peptide cyclase from Xanthomonas axonopodis pv. citri (strain 306).